The primary structure comprises 497 residues: Arabinose import ATP-binding protein AraG (497 aa).

ABC transporter domains are found at residues 6-242 and 250-497; these read LRFD…MVGR and FRPR…ALPA. 38 to 45 contributes to the ATP binding site; it reads GENGAGKS.

It belongs to the ABC transporter superfamily. Arabinose importer (TC 3.A.1.2.2) family. In terms of assembly, the complex is composed of two ATP-binding proteins (AraG), two transmembrane proteins (AraH) and a solute-binding protein (AraF).

The protein localises to the cell inner membrane. The enzyme catalyses L-arabinose(out) + ATP + H2O = L-arabinose(in) + ADP + phosphate + H(+). Functionally, part of the ABC transporter complex AraFGH involved in arabinose import. Responsible for energy coupling to the transport system. In Chromohalobacter salexigens (strain ATCC BAA-138 / DSM 3043 / CIP 106854 / NCIMB 13768 / 1H11), this protein is Arabinose import ATP-binding protein AraG.